Consider the following 246-residue polypeptide: UDP-2,3-diacylglucosamine hydrolase (246 aa).

Mn(2+)-binding residues include Asp-8, His-10, Asp-41, Asn-79, and His-114. 79–80 (NR) is a binding site for substrate. Substrate is bound by residues Asp-122, Lys-164, Lys-167, and His-195. 2 residues coordinate Mn(2+): His-195 and His-197.

The protein belongs to the LpxH family. Requires Mn(2+) as cofactor.

It localises to the cell inner membrane. It catalyses the reaction UDP-2-N,3-O-bis[(3R)-3-hydroxytetradecanoyl]-alpha-D-glucosamine + H2O = 2-N,3-O-bis[(3R)-3-hydroxytetradecanoyl]-alpha-D-glucosaminyl 1-phosphate + UMP + 2 H(+). Its pathway is glycolipid biosynthesis; lipid IV(A) biosynthesis; lipid IV(A) from (3R)-3-hydroxytetradecanoyl-[acyl-carrier-protein] and UDP-N-acetyl-alpha-D-glucosamine: step 4/6. Hydrolyzes the pyrophosphate bond of UDP-2,3-diacylglucosamine to yield 2,3-diacylglucosamine 1-phosphate (lipid X) and UMP by catalyzing the attack of water at the alpha-P atom. Involved in the biosynthesis of lipid A, a phosphorylated glycolipid that anchors the lipopolysaccharide to the outer membrane of the cell. The polypeptide is UDP-2,3-diacylglucosamine hydrolase (Vibrio cholerae serotype O1 (strain ATCC 39541 / Classical Ogawa 395 / O395)).